Reading from the N-terminus, the 364-residue chain is Valine dehydrogenase (364 aa).

Lysine 91 is a catalytic residue. 191–197 (GVGKVGH) serves as a coordination point for NAD(+).

Belongs to the Glu/Leu/Phe/Val dehydrogenases family. As to quaternary structure, homodimer.

It is found in the cytoplasm. It carries out the reaction L-valine + NAD(+) + H2O = 3-methyl-2-oxobutanoate + NH4(+) + NADH + H(+). Its pathway is amino-acid degradation; L-valine degradation. Its activity is regulated as follows. Repressed in minimal medium by the presence of glucose and NH4(+), glycerol and NH4(+), or glycerol and asparagine. Functionally, oxidative deamination of branched-chain amino acids. Oxidizes L-valine and L-alpha-aminobutyric acid efficiently, and L-isoleucine and L-leucine less efficiently. Does not act on D-valine. The catabolism of L-valine is the major source of fatty acid precursors for macrolide biosynthesis and a vital source of antibiotic precursors. Uses NAD; no activity was found with NADP. This chain is Valine dehydrogenase (vdh), found in Streptomyces coelicolor (strain ATCC BAA-471 / A3(2) / M145).